We begin with the raw amino-acid sequence, 124 residues long: Small ribosomal subunit protein bS6m (124 aa).

The protein belongs to the bacterial ribosomal protein bS6 family. In terms of assembly, component of the mitochondrial ribosome small subunit (28S) which comprises a 12S rRNA and about 30 distinct proteins.

Its subcellular location is the mitochondrion. This is Small ribosomal subunit protein bS6m (MRPS6) from Bos taurus (Bovine).